The chain runs to 341 residues: Thymidine kinase (341 aa).

Gly-19–Thr-26 contacts ATP. The active-site Proton acceptor is the Glu-48. Tyr-66 and Gln-90 together coordinate substrate. Arg-183 contributes to the ATP binding site. Position 189 (Arg-189) interacts with substrate.

This sequence belongs to the herpesviridae thymidine kinase family. Homodimer.

The catalysed reaction is thymidine + ATP = dTMP + ADP + H(+). In terms of biological role, catalyzes the transfer of the gamma-phospho group of ATP to thymidine to generate dTMP in the salvage pathway of pyrimidine synthesis. The dTMP serves as a substrate for DNA polymerase during viral DNA replication. Allows the virus to be reactivated and to grow in non-proliferative cells lacking a high concentration of phosphorylated nucleic acid precursors. This Varicella-zoster virus (strain Dumas) (HHV-3) protein is Thymidine kinase.